The following is a 207-amino-acid chain: Glycerol-3-phosphate acyltransferase (207 aa).

5 helical membrane-spanning segments follow: residues 3–23 (LIGL…VWVG), 54–74 (TIVM…PIVF), 81–101 (GTAT…VSIF), 122–142 (PIMF…TSIV), and 158–178 (LVFQ…FVFY).

This sequence belongs to the PlsY family. In terms of assembly, probably interacts with PlsX.

It localises to the cell membrane. It carries out the reaction an acyl phosphate + sn-glycerol 3-phosphate = a 1-acyl-sn-glycero-3-phosphate + phosphate. Its pathway is lipid metabolism; phospholipid metabolism. Functionally, catalyzes the transfer of an acyl group from acyl-phosphate (acyl-PO(4)) to glycerol-3-phosphate (G3P) to form lysophosphatidic acid (LPA). This enzyme utilizes acyl-phosphate as fatty acyl donor, but not acyl-CoA or acyl-ACP. In Levilactobacillus brevis (strain ATCC 367 / BCRC 12310 / CIP 105137 / JCM 1170 / LMG 11437 / NCIMB 947 / NCTC 947) (Lactobacillus brevis), this protein is Glycerol-3-phosphate acyltransferase.